Reading from the N-terminus, the 146-residue chain is Inclusion membrane protein D (146 aa).

Transmembrane regions (helical) follow at residues 38–58 and 68–88; these read AAVA…GLLF and VVAA…ALVG.

The protein localises to the secreted. Its subcellular location is the host vacuole. The protein resides in the host pathogen-containing vacuole. It is found in the host pathogen-containing vacuole membrane. Functionally, host inclusion membrane protein probably involved in early modification events of the chlamydial inclusion. This chain is Inclusion membrane protein D, found in Chlamydia trachomatis serovar L2 (strain ATCC VR-902B / DSM 19102 / 434/Bu).